We begin with the raw amino-acid sequence, 661 residues long: PAN2-PAN3 deadenylation complex subunit PAN3 (661 aa).

2 disordered regions span residues 1-26 and 53-130; these read MASA…AREN and DPHK…LRQD. The C3H1-type zinc-finger motif lies at 26 to 55; sequence NAKDTLCRNITIYGRCRYEDKGCAFNHDPH. Positions 75–102 are enriched in low complexity; sequence SFTPSLLSSNGSSPTSTPATTKKMTTIS. Over residues 115 to 130 the composition is skewed to polar residues; the sequence is SVVSRSNASTPGLRQD. The interval 263-524 is pseudokinase domain; the sequence is QTLPNTQLPA…NIDIFITGIS (262 aa). ATP contacts are provided by residues Arg315, 364-371, and 424-425; these read DYHPLSKT and SK. The stretch at 525–563 forms a coiled coil; that stretch reads SQLMSTFDSALHLDDQLTSDLSRELENGRLVRLMTKLNF. Residues 564-661 are knob domain; that stretch reads VNERPEYEHD…ALMKPARRMH (98 aa).

This sequence belongs to the protein kinase superfamily. PAN3 family. As to quaternary structure, homodimer. Forms a heterotrimer with a catalytic subunit pan2 to form the poly(A)-nuclease (PAN) deadenylation complex. Interacts (via PAM-2 motif) with poly(A)-binding protein pab1 (via PABC domain), conferring substrate specificity of the enzyme complex.

The protein resides in the cytoplasm. Its function is as follows. Regulatory subunit of the poly(A)-nuclease (PAN) deadenylation complex, one of two cytoplasmic mRNA deadenylases involved in mRNA turnover. PAN specifically shortens poly(A) tails of RNA and the activity is stimulated by poly(A)-binding protein pab1. PAN deadenylation is followed by rapid degradation of the shortened mRNA tails by the CCR4-NOT complex. Deadenylated mRNAs are then degraded by two alternative mechanisms, namely exosome-mediated 3'-5' exonucleolytic degradation, or deadenylation-dependent mRNA decaping and subsequent 5'-3' exonucleolytic degradation by xrn1. May also be involved in post-transcriptional maturation of mRNA poly(A) tails. pan3 acts as a positive regulator for PAN activity, recruiting the catalytic subunit pan2 to mRNA via its interaction with RNA and with pab1. This is PAN2-PAN3 deadenylation complex subunit PAN3 from Neosartorya fischeri (strain ATCC 1020 / DSM 3700 / CBS 544.65 / FGSC A1164 / JCM 1740 / NRRL 181 / WB 181) (Aspergillus fischerianus).